A 322-amino-acid polypeptide reads, in one-letter code: Putative pyruvyl transferase EpsO (322 aa).

Belongs to the polysaccharide pyruvyl transferase family.

May be involved in the production of the exopolysaccharide (EPS) component of the extracellular matrix during biofilm formation. EPS is responsible for the adhesion of chains of cells into bundles. This is Putative pyruvyl transferase EpsO (epsO) from Bacillus subtilis (strain 168).